A 208-amino-acid chain; its full sequence is Glutathione S-transferase 1-1 (208 aa).

The 80-residue stretch at 1–80 (MDFYYLPGSA…YLVEKYGKND (80 aa)) folds into the GST N-terminal domain. Glutathione is bound by residues serine 9, 50 to 52 (HTI), and 64 to 66 (ESR). A GST C-terminal domain is found at 86-207 (CPKKRAVINQ…EGCLEFKKFF (122 aa)).

The protein belongs to the GST superfamily. Theta family. As to quaternary structure, homodimer.

It catalyses the reaction RX + glutathione = an S-substituted glutathione + a halide anion + H(+). Conjugation of reduced glutathione to a wide number of exogenous and endogenous hydrophobic electrophiles. This Lucilia cuprina (Green bottle fly) protein is Glutathione S-transferase 1-1 (GST1).